A 213-amino-acid polypeptide reads, in one-letter code: 3,4-dihydroxy-2-butanone 4-phosphate synthase (213 aa).

Residues 27–28, Asp-32, 140–144, and Glu-164 each bind D-ribulose 5-phosphate; these read RE and RTGHT. Position 28 (Glu-28) interacts with Mg(2+). His-143 contributes to the Mg(2+) binding site.

Belongs to the DHBP synthase family. As to quaternary structure, homodimer. Requires Mg(2+) as cofactor. The cofactor is Mn(2+).

It carries out the reaction D-ribulose 5-phosphate = (2S)-2-hydroxy-3-oxobutyl phosphate + formate + H(+). The protein operates within cofactor biosynthesis; riboflavin biosynthesis; 2-hydroxy-3-oxobutyl phosphate from D-ribulose 5-phosphate: step 1/1. In terms of biological role, catalyzes the conversion of D-ribulose 5-phosphate to formate and 3,4-dihydroxy-2-butanone 4-phosphate. This Agrobacterium fabrum (strain C58 / ATCC 33970) (Agrobacterium tumefaciens (strain C58)) protein is 3,4-dihydroxy-2-butanone 4-phosphate synthase.